Reading from the N-terminus, the 343-residue chain is Probable dual-specificity RNA methyltransferase RlmN (343 aa).

E91 acts as the Proton acceptor in catalysis. Residues 97–326 (HPDRITACIS…AEIRREKGSD (230 aa)) enclose the Radical SAM core domain. A disulfide bridge connects residues C104 and C331. Residues C111, C115, and C118 each coordinate [4Fe-4S] cluster. S-adenosyl-L-methionine contacts are provided by residues 158–159 (GE), S190, 213–215 (SLH), and N289. The S-methylcysteine intermediate role is filled by C331.

Belongs to the radical SAM superfamily. RlmN family. [4Fe-4S] cluster is required as a cofactor.

Its subcellular location is the cytoplasm. It catalyses the reaction adenosine(2503) in 23S rRNA + 2 reduced [2Fe-2S]-[ferredoxin] + 2 S-adenosyl-L-methionine = 2-methyladenosine(2503) in 23S rRNA + 5'-deoxyadenosine + L-methionine + 2 oxidized [2Fe-2S]-[ferredoxin] + S-adenosyl-L-homocysteine. The enzyme catalyses adenosine(37) in tRNA + 2 reduced [2Fe-2S]-[ferredoxin] + 2 S-adenosyl-L-methionine = 2-methyladenosine(37) in tRNA + 5'-deoxyadenosine + L-methionine + 2 oxidized [2Fe-2S]-[ferredoxin] + S-adenosyl-L-homocysteine. Its function is as follows. Specifically methylates position 2 of adenine 2503 in 23S rRNA and position 2 of adenine 37 in tRNAs. In Thermotoga sp. (strain RQ2), this protein is Probable dual-specificity RNA methyltransferase RlmN.